Here is a 391-residue protein sequence, read N- to C-terminus: MKIISVNAGSSSLKFKLFDMPKEELIFSGLIEKIGDQKSIFSLSYGNTKKETIMPVLNHQQAVKLLLDSLQINKIIDNLEEIKGVGHRIVQGGELFKDSVVLTEENILKIESLNDLAPLHNYANVLGIKAFEKNIPNIFQVGVFDTTFHQTIKQENFSYAIPYEWYQKYKIRKYGFHGISYKYVSNRTSEILANKDSKIIVCHAGNGVSLCAIEGNNSVDTSMGFTPLEGVPMGTRSGNIDPTIIEFISYKENKSIKEIMNILNKKSGFLGVSGVSNDARDIEISLQNGNKRSLLAHDVQIKRICDYIGSYYFLLKGIDALVFTAGMGENSSLFRKKIIQRLSFLGVFLDDEFNNSKGERIISTSNSFFKVLVIPTNEEIEIVREVCKIKN.

A Mg(2+)-binding site is contributed by Asn-7. Lys-14 contributes to the ATP binding site. Arg-88 contacts substrate. The Proton donor/acceptor role is filled by Asp-145. Residues 203–207, 278–280, and 326–330 each bind ATP; these read HAGNG, DAR, and GMGEN. Glu-378 serves as a coordination point for Mg(2+).

Belongs to the acetokinase family. Homodimer. Requires Mg(2+) as cofactor. Mn(2+) serves as cofactor.

It localises to the cytoplasm. It carries out the reaction acetate + ATP = acetyl phosphate + ADP. It functions in the pathway metabolic intermediate biosynthesis; acetyl-CoA biosynthesis; acetyl-CoA from acetate: step 1/2. Its function is as follows. Catalyzes the formation of acetyl phosphate from acetate and ATP. Can also catalyze the reverse reaction. In Phytoplasma mali (strain AT), this protein is Acetate kinase.